The following is a 358-amino-acid chain: tRNA-specific 2-thiouridylase MnmA 2 (358 aa).

ATP contacts are provided by residues 11 to 18 and methionine 37; that span reads GMSGGVDS. The active-site Nucleophile is the cysteine 106. A disulfide bond links cysteine 106 and cysteine 202. Glycine 130 contributes to the ATP binding site. The interaction with tRNA stretch occupies residues 152-154; that stretch reads KDQ. The active-site Cysteine persulfide intermediate is the cysteine 202. Residues 308–309 form an interaction with tRNA region; that stretch reads RY.

Belongs to the MnmA/TRMU family.

The protein localises to the cytoplasm. The catalysed reaction is S-sulfanyl-L-cysteinyl-[protein] + uridine(34) in tRNA + AH2 + ATP = 2-thiouridine(34) in tRNA + L-cysteinyl-[protein] + A + AMP + diphosphate + H(+). Functionally, catalyzes the 2-thiolation of uridine at the wobble position (U34) of tRNA, leading to the formation of s(2)U34. The sequence is that of tRNA-specific 2-thiouridylase MnmA 2 from Clostridium tetani (strain Massachusetts / E88).